Reading from the N-terminus, the 304-residue chain is MTKDIRTGDLVLCKVGSFPPWPAVVFPQRLLRNDVYRKRKSNCVAVCFFNDPTYYWEQPSRLKELDQDSIHNFILEHSKNANQRELVNAYKEAKNFDDFNVFLQEKFEEENRLSDLKAFEKSEGSKIVAGEDPFVGRTKVVNKRKKNSISIKEDPEDNQKSNEEESKPNIKPSKKKRPTANSGGKSNSGNKKKVKLDYSRRVEISQLFRRRIQRNLIQRETPPTEHEIKETHELLNRIYENSDTKRPFFDLKALRESKLHKLLKAIVNDPDLGEFHPLCKEILLSWADLITELKKEKLQALPTP.

In terms of domain architecture, PWWP spans 7–68 (TGDLVLCKVG…PSRLKELDQD (62 aa)). The disordered stretch occupies residues 145-195 (KKNSISIKEDPEDNQKSNEEESKPNIKPSKKKRPTANSGGKSNSGNKKKVK). Basic and acidic residues predominate over residues 151 to 168 (IKEDPEDNQKSNEEESKP).

In terms of assembly, component of the NuA3 histone acetyltransferase (HAT) complex. The NuA3 HAT complex has 2 functionally distinct forms that participate in transcription. The NuA3a HAT complex is composed of at least NTO1, SAS3, TAF14, YNG1 and EAF6. The NuA3b HAT complex contains an additional subunit, PDP3.

It localises to the nucleus. Its subcellular location is the cytoplasm. Functionally, histone-binding component of the NuA3b histone acetyltransferase complex. Targets the NuA3b HAT complex via histone H3K36me3 to the coding regions of actively transcribed genes to coordinate transcription elongation. Stimulates elongation by RNA polymerase II in vitro. The sequence is that of NuA3 HAT complex component PDP3 from Saccharomyces cerevisiae (strain ATCC 204508 / S288c) (Baker's yeast).